Consider the following 388-residue polypeptide: Succinate--CoA ligase [ADP-forming] subunit beta (388 aa).

Residues 9–244 (KKLFAEYGLP…PSQDDPREAH (236 aa)) form the ATP-grasp domain. ATP-binding positions include Lys46, 53 to 55 (GRG), Glu99, Thr102, and Glu107. Residues Asn199 and Asp213 each coordinate Mg(2+). Residues Asn264 and 321–323 (GIV) contribute to the substrate site.

Belongs to the succinate/malate CoA ligase beta subunit family. In terms of assembly, heterotetramer of two alpha and two beta subunits. It depends on Mg(2+) as a cofactor.

The catalysed reaction is succinate + ATP + CoA = succinyl-CoA + ADP + phosphate. It catalyses the reaction GTP + succinate + CoA = succinyl-CoA + GDP + phosphate. The protein operates within carbohydrate metabolism; tricarboxylic acid cycle; succinate from succinyl-CoA (ligase route): step 1/1. Its function is as follows. Succinyl-CoA synthetase functions in the citric acid cycle (TCA), coupling the hydrolysis of succinyl-CoA to the synthesis of either ATP or GTP and thus represents the only step of substrate-level phosphorylation in the TCA. The beta subunit provides nucleotide specificity of the enzyme and binds the substrate succinate, while the binding sites for coenzyme A and phosphate are found in the alpha subunit. This chain is Succinate--CoA ligase [ADP-forming] subunit beta, found in Aeromonas salmonicida (strain A449).